The chain runs to 305 residues: UDP-3-O-acyl-N-acetylglucosamine deacetylase (305 aa).

Zn(2+) is bound by residues histidine 79, histidine 238, and aspartate 242. The active-site Proton donor is the histidine 265.

This sequence belongs to the LpxC family. It depends on Zn(2+) as a cofactor.

The enzyme catalyses a UDP-3-O-[(3R)-3-hydroxyacyl]-N-acetyl-alpha-D-glucosamine + H2O = a UDP-3-O-[(3R)-3-hydroxyacyl]-alpha-D-glucosamine + acetate. It functions in the pathway glycolipid biosynthesis; lipid IV(A) biosynthesis; lipid IV(A) from (3R)-3-hydroxytetradecanoyl-[acyl-carrier-protein] and UDP-N-acetyl-alpha-D-glucosamine: step 2/6. In terms of biological role, catalyzes the hydrolysis of UDP-3-O-myristoyl-N-acetylglucosamine to form UDP-3-O-myristoylglucosamine and acetate, the committed step in lipid A biosynthesis. The polypeptide is UDP-3-O-acyl-N-acetylglucosamine deacetylase (Vibrio cholerae serotype O1 (strain ATCC 39541 / Classical Ogawa 395 / O395)).